The sequence spans 1010 residues: Translation initiation factor IF-2 (1010 aa).

Disordered regions lie at residues 54–350 and 364–420; these read KGLA…FEDD and PSFT…RPES. Polar residues predominate over residues 57-70; that stretch reads ASSTSKNSTGQRES. The span at 112–124 shows a compositional bias: pro residues; the sequence is ISPPRPPVKPLVA. Residues 145-155 are compositionally biased toward polar residues; that stretch reads HSPSVKETPTE. The segment covering 200–258 has biased composition (basic and acidic residues); it reads DRPRGEKRERGESENAPSPERRVGLAKPEKPTLNRKPDGKSPKLAEPAREVRETVELKR. Positions 378-389 are enriched in low complexity; sequence TAKAAPPGTPTA. Basic and acidic residues predominate over residues 406 to 419; it reads KSERQEPQEEKRPE. The tr-type G domain occupies 502-675; that stretch reads RRPPVVTIMG…LLVAEVEELV (174 aa). The tract at residues 511–518 is G1; that stretch reads GHVDHGKT. 511–518 contacts GTP; it reads GHVDHGKT. The segment at 536 to 540 is G2; the sequence is GITQH. Positions 561–564 are G3; sequence DTPG. GTP is bound by residues 561-565 and 615-618; these read DTPGH and NKVD. The segment at 615–618 is G4; sequence NKVD. A G5 region spans residues 651 to 653; it reads SAL.

Belongs to the TRAFAC class translation factor GTPase superfamily. Classic translation factor GTPase family. IF-2 subfamily.

It is found in the cytoplasm. Functionally, one of the essential components for the initiation of protein synthesis. Protects formylmethionyl-tRNA from spontaneous hydrolysis and promotes its binding to the 30S ribosomal subunits. Also involved in the hydrolysis of GTP during the formation of the 70S ribosomal complex. The sequence is that of Translation initiation factor IF-2 from Microcystis aeruginosa (strain NIES-843 / IAM M-2473).